The following is a 586-amino-acid chain: 3-hydroxy-3-methylglutaryl-coenzyme A reductase 3 (586 aa).

2 helical membrane-spanning segments follow: residues 36 to 59 (PSDY…FFSV) and 87 to 107 (ALIC…IGFV). The segment at 108 to 170 (HSFSRASTDS…STTTTSTLSD (63 aa)) is linker. Catalytic stretches follow at residues 171–586 (DDEQ…KITF) and 172–586 (DEQI…KITF). Catalysis depends on charge relay system residues E265, K397, and D473. Residue H571 is the Proton donor of the active site. N575 carries N-linked (GlcNAc...) asparagine glycosylation.

This sequence belongs to the HMG-CoA reductase family.

The protein resides in the endoplasmic reticulum membrane. It is found in the mitochondrion membrane. The protein localises to the plastid membrane. The catalysed reaction is (R)-mevalonate + 2 NADP(+) + CoA = (3S)-3-hydroxy-3-methylglutaryl-CoA + 2 NADPH + 2 H(+). It participates in metabolic intermediate biosynthesis; (R)-mevalonate biosynthesis; (R)-mevalonate from acetyl-CoA: step 3/3. Its function is as follows. Catalyzes the synthesis of mevalonate. The specific precursor of all isoprenoid compounds present in plants. This Hevea brasiliensis (Para rubber tree) protein is 3-hydroxy-3-methylglutaryl-coenzyme A reductase 3 (HMGR3).